The chain runs to 353 residues: Type 2 DNA topoisomerase 6 subunit A (353 aa).

Residues 2-138 (NRREIAINKL…LGLMPEEDGA (137 aa)) form the Topo IIA-type catalytic domain. The active-site O-(5'-phospho-DNA)-tyrosine intermediate is Y96. 2 residues coordinate Mg(2+): E186 and D238.

This sequence belongs to the TOP6A family. Homodimer. Heterotetramer of two Top6A and two Top6B chains. Mg(2+) serves as cofactor.

The catalysed reaction is ATP-dependent breakage, passage and rejoining of double-stranded DNA.. Functionally, relaxes both positive and negative superturns and exhibits a strong decatenase activity. This Methanothermobacter thermautotrophicus (strain ATCC 29096 / DSM 1053 / JCM 10044 / NBRC 100330 / Delta H) (Methanobacterium thermoautotrophicum) protein is Type 2 DNA topoisomerase 6 subunit A.